Here is a 307-residue protein sequence, read N- to C-terminus: Probable porphobilinogen deaminase (307 aa).

S-(dipyrrolylmethanemethyl)cysteine is present on C240.

The protein belongs to the HMBS family. The cofactor is dipyrromethane.

It catalyses the reaction 4 porphobilinogen + H2O = hydroxymethylbilane + 4 NH4(+). It functions in the pathway porphyrin-containing compound metabolism; protoporphyrin-IX biosynthesis; coproporphyrinogen-III from 5-aminolevulinate: step 2/4. Tetrapolymerization of the monopyrrole PBG into the hydroxymethylbilane pre-uroporphyrinogen in several discrete steps. This chain is Probable porphobilinogen deaminase (hemC), found in Aeropyrum pernix (strain ATCC 700893 / DSM 11879 / JCM 9820 / NBRC 100138 / K1).